The sequence spans 735 residues: ATP-dependent DNA helicase Hel308 (735 aa).

Residues glutamine 32 and 50 to 57 (APTGSGKT) contribute to the ATP site. A Helicase ATP-binding domain is found at 37-201 (QAGVEKGENL…WIGGKIVESS (165 aa)). A DEAH box motif is present at residues 146-149 (DEIH). The Helicase C-terminal domain occupies 235–431 (DLDLAAEAIE…GLRGLRHFIL (197 aa)).

This sequence belongs to the helicase family. Hel308 subfamily. In terms of assembly, monomer.

The catalysed reaction is Couples ATP hydrolysis with the unwinding of duplex DNA by translocating in the 3'-5' direction.. It catalyses the reaction ATP + H2O = ADP + phosphate + H(+). In terms of biological role, DNA-dependent ATPase and 3'-5' DNA helicase that may be involved in repair of stalled replication forks. This chain is ATP-dependent DNA helicase Hel308, found in Aeropyrum pernix (strain ATCC 700893 / DSM 11879 / JCM 9820 / NBRC 100138 / K1).